The sequence spans 376 residues: uncharacterized protein (376 aa).

2 stretches are compositionally biased toward low complexity: residues 73 to 99 and 228 to 243; these read NNSI…NNNN and SSFS…TVSS. Disordered regions lie at residues 73–100 and 222–269; these read NNSI…NNNL and EQDP…KISD.

This is an uncharacterized protein from Saccharomyces cerevisiae (strain ATCC 204508 / S288c) (Baker's yeast).